The primary structure comprises 713 residues: uncharacterized protein (713 aa).

Residues 686–706 (VWKFNPALYSTITNIFLLIIF) traverse the membrane as a helical segment.

This sequence belongs to the plectrovirus ORF1 family.

It is found in the host membrane. This is an uncharacterized protein from Spiroplasma melliferum (SpV1).